The sequence spans 222 residues: Hexitol phosphatase B (222 aa).

Catalysis depends on Asp-13, which acts as the Nucleophile. A divalent metal cation is bound by residues Asp-13 and Asp-15. Residues 13 to 15 (DMD), 115 to 116 (SA), and Lys-148 each bind substrate. Asp-15 (proton donor) is an active-site residue. Residue Asp-173 participates in a divalent metal cation binding.

This sequence belongs to the HAD-like hydrolase superfamily. CbbY/CbbZ/Gph/YieH family. It depends on Mg(2+) as a cofactor. Requires Mn(2+) as cofactor. Co(2+) serves as cofactor. The cofactor is Zn(2+).

The enzyme catalyses sugar phosphate + H2O = sugar + phosphate.. The catalysed reaction is 2-deoxy-D-glucose 6-phosphate + H2O = 2-deoxy-D-glucose + phosphate. It carries out the reaction D-mannitol 1-phosphate + H2O = D-mannitol + phosphate. It catalyses the reaction D-sorbitol 6-phosphate + H2O = D-sorbitol + phosphate. Functionally, sugar-phosphate phosphohydrolase that catalyzes the dephosphorylation of D-mannitol 1-phosphate and D-sorbitol 6-phosphate. Also catalyzes the dephosphorylation of 2-deoxyglucose 6-phosphate (2dGlu6P); this is a biologically important activity in vivo since it contributes to the elimination of this toxic compound and plays an important role in the resistance of E.coli to 2-deoxyglucose. This is Hexitol phosphatase B from Escherichia coli O157:H7.